We begin with the raw amino-acid sequence, 509 residues long: Maturase K (509 aa).

The protein belongs to the intron maturase 2 family. MatK subfamily.

It is found in the plastid. Its subcellular location is the chloroplast. Usually encoded in the trnK tRNA gene intron. Probably assists in splicing its own and other chloroplast group II introns. This chain is Maturase K, found in Nicotiana acuminata (Acuminate tobacco).